A 315-amino-acid chain; its full sequence is Homoserine O-succinyltransferase (315 aa).

The active-site Acyl-thioester intermediate is the C142. Positions 163 and 192 each coordinate substrate. H235 serves as the catalytic Proton acceptor. E237 is a catalytic residue. R249 provides a ligand contact to substrate.

Belongs to the MetA family.

It localises to the cytoplasm. It carries out the reaction L-homoserine + succinyl-CoA = O-succinyl-L-homoserine + CoA. It functions in the pathway amino-acid biosynthesis; L-methionine biosynthesis via de novo pathway; O-succinyl-L-homoserine from L-homoserine: step 1/1. Transfers a succinyl group from succinyl-CoA to L-homoserine, forming succinyl-L-homoserine. The protein is Homoserine O-succinyltransferase of Shewanella piezotolerans (strain WP3 / JCM 13877).